Here is a 429-residue protein sequence, read N- to C-terminus: 3-phosphoshikimate 1-carboxyvinyltransferase (429 aa).

The 3-phosphoshikimate site is built by K22, S23, and R27. K22 provides a ligand contact to phosphoenolpyruvate. Positions 94 and 122 each coordinate phosphoenolpyruvate. 3-phosphoshikimate is bound by residues S167, Q169, D315, and K342. A phosphoenolpyruvate-binding site is contributed by Q169. The active-site Proton acceptor is D315. The phosphoenolpyruvate site is built by R346 and R388.

This sequence belongs to the EPSP synthase family. Monomer.

The protein resides in the cytoplasm. It catalyses the reaction 3-phosphoshikimate + phosphoenolpyruvate = 5-O-(1-carboxyvinyl)-3-phosphoshikimate + phosphate. It functions in the pathway metabolic intermediate biosynthesis; chorismate biosynthesis; chorismate from D-erythrose 4-phosphate and phosphoenolpyruvate: step 6/7. Its function is as follows. Catalyzes the transfer of the enolpyruvyl moiety of phosphoenolpyruvate (PEP) to the 5-hydroxyl of shikimate-3-phosphate (S3P) to produce enolpyruvyl shikimate-3-phosphate and inorganic phosphate. This chain is 3-phosphoshikimate 1-carboxyvinyltransferase, found in Geotalea daltonii (strain DSM 22248 / JCM 15807 / FRC-32) (Geobacter daltonii).